We begin with the raw amino-acid sequence, 78 residues long: MNPMIEFCVSNLARGSQEALEILEKDPNLDVLEYGCLSYCGKCMESLFALVNGEVVTGGTPAELVDNIYTFIEENPMF.

It belongs to the UPF0349 family.

The protein is UPF0349 protein RBAM_029300 of Bacillus velezensis (strain DSM 23117 / BGSC 10A6 / LMG 26770 / FZB42) (Bacillus amyloliquefaciens subsp. plantarum).